A 1905-amino-acid polypeptide reads, in one-letter code: Transport and Golgi organization protein 1 homolog (1905 aa).

A signal peptide spans 1-22 (MAAAQGLLFWLLLLGPPCRVPG). Over 23-1141 (QPEQDPGRRF…EPASVTPLEN (1119 aa)) the chain is Lumenal. In terms of domain architecture, SH3 spans 45–107 (MLMYRGEALE…PKDLIQVVHE (63 aa)). The span at 154–167 (SEKVKEKTAQRVEE) shows a compositional bias: basic and acidic residues. 2 disordered regions span residues 154 to 259 (SEKV…HEQE) and 313 to 621 (TVGK…IKDR). N-linked (GlcNAc...) asparagine glycosylation occurs at Asn173. Over residues 173–190 (NESDAEPEPGEPNSEESE) the composition is skewed to acidic residues. Residues 198–208 (AELRERSEAQK) are compositionally biased toward basic and acidic residues. Polar residues predominate over residues 209 to 220 (SHPQVNSQTGHA). Phosphoserine is present on residues Ser226 and Ser229. Residues 234-245 (LQDKLKVPDSEN) are compositionally biased toward basic and acidic residues. Asn246 is a glycosylation site (N-linked (GlcNAc...) asparagine). The segment covering 246–255 (NKTSNSSQVS) has biased composition (polar residues). A compositionally biased stretch (acidic residues) spans 317-327 (EEEENKEDFDE). Composition is skewed to basic and acidic residues over residues 337 to 366 (EDTK…KVEE) and 373 to 386 (KKGD…REDT). Over residues 392–414 (MEGEENTDTDLESSDSKEEDDPL) the composition is skewed to acidic residues. 2 stretches are compositionally biased toward basic and acidic residues: residues 419 to 436 (RLGK…KAAD) and 459 to 480 (HMKD…HEVG). The stretch at 467 to 527 (VEEPRRDWVQ…ANQENDLKGA (61 aa)) forms a coiled coil. A compositionally biased stretch (polar residues) spans 488 to 500 (DQAVQGSSQSGHL). The span at 531–542 (ISKEMLHEEKPS) shows a compositional bias: basic and acidic residues. N-linked (GlcNAc...) asparagine glycosylation occurs at Asn627. Disordered stretches follow at residues 657–908 (QQGG…PHAP), 1036–1059 (APPA…QPPL), and 1085–1118 (PVTR…TPVD). Basic and acidic residues predominate over residues 669 to 714 (VSEKRELPEEEVTRVTKDASDEGQEVRKTGQTDSIEGRGFRPKEPN). The span at 715–730 (PEDEDYSPEELLEDEN) shows a compositional bias: acidic residues. Basic and acidic residues-rich tracts occupy residues 736 to 751 (QSKE…RLDV), 766 to 789 (TDPE…KNET), 842 to 859 (SQKK…EGHP), and 868 to 884 (PGVE…EKFV). Ser873 carries the phosphoserine modification. An intramembrane segment occupies 1142 to 1162 (AIAFIYSLVFHLTKTLLATLP). The Lumenal portion of the chain corresponds to 1163-1173 (DDVQPGPDFYG). Residues 1174-1194 (LPWKPVLITASLGIVSFAVFF) traverse the membrane as a helical segment. At 1195–1905 (WRTVLAVKSR…DCSPALKQSP (711 aa)) the chain is on the cytoplasmic side. Residues 1208–1647 (VTEQQISEKL…VIVKPMPGRP (440 aa)) are mediates interaction with MIA2. Positions 1211–1393 (QQISEKLKNI…SQKDLEVALT (183 aa)) form a coiled coil. Positions 1416–1443 (SESEDQNKGGSESDELANGEVGGDRSEK) are disordered. Ser1428 is subject to Phosphoserine. A coiled-coil region spans residues 1484–1636 (NLEDQIKKLE…TQKMAMMQEE (153 aa)). The disordered stretch occupies residues 1639–1905 (IVKPMPGRPN…DCSPALKQSP (267 aa)). The span at 1647 to 1664 (PNTQNPPRRGPLSQNGSF) shows a compositional bias: polar residues. 6 positions are modified to phosphoserine: Ser1663, Ser1675, Ser1703, Ser1724, Ser1738, and Ser1742. The tract at residues 1748-1905 (DEGKVSMAAK…DCSPALKQSP (158 aa)) is proline-rich domain (PRD); mediates interaction with the COPII coat subunits SEC23A and SEC23B. Residues 1776–1806 (LLPPIRYGPPPQLCGPFGPRPLPPPFGPGMR) show a composition bias toward pro residues. Arg1781 carries the post-translational modification Asymmetric dimethylarginine. An SEC16A-interacting region (SIR); required for its localization to endoplasmic reticulum exit sites and for its interaction with SEC16A region spans residues 1785-1845 (PPQLCGPFGP…GHAPFRPLGS (61 aa)). Residues 1821 to 1831 (GKRDLPLDPRE) show a composition bias toward basic and acidic residues. 2 positions are modified to phosphoserine: Ser1890 and Ser1904. A compositionally biased stretch (polar residues) spans 1891–1905 (QGASQDCSPALKQSP).

Belongs to the MIA/OTOR family. Tango1 subfamily. In terms of assembly, interacts with MIA2. Interacts (via SH3 domain) with COL7A1. Interacts with the COPII coat subunits SEC23A, SEC23B and maybe SEC24C. May interact with APOB and MIA2. Interacts with SEC16A.

Its subcellular location is the endoplasmic reticulum membrane. Functionally, plays a role in the transport of cargos that are too large to fit into COPII-coated vesicles and require specific mechanisms to be incorporated into membrane-bound carriers and exported from the endoplasmic reticulum. This protein is required for collagen VII (COL7A1) secretion by loading COL7A1 into transport carriers. It may participate in cargo loading of COL7A1 at endoplasmic reticulum exit sites by binding to COPII coat subunits Sec23/24 and guiding SH3-bound COL7A1 into a growing carrier. Does not play a role in global protein secretion and is apparently specific to COL7A1 cargo loading. However, it may participate in secretion of other proteins in cells that do not secrete COL7A1. It is also specifically required for the secretion of lipoproteins by participating in their export from the endoplasmic reticulum. Required for correct assembly of COPII coat components at endoplasmic reticulum exit sites (ERES) and for the localization of SEC16A and membrane-bound ER-resident complexes consisting of MIA2 and PREB/SEC12 to ERES. The chain is Transport and Golgi organization protein 1 homolog from Bos taurus (Bovine).